The following is a 183-amino-acid chain: UPF0397 protein VFMJ11_1662 (183 aa).

Transmembrane regions (helical) follow at residues 8–28 (VVVI…MFGI), 41–61 (AVLA…VGFI), 75–95 (WLTW…FPII), 110–130 (FLIF…TSAF), and 147–167 (LCII…FILN).

Belongs to the UPF0397 family.

It is found in the cell membrane. This is UPF0397 protein VFMJ11_1662 from Aliivibrio fischeri (strain MJ11) (Vibrio fischeri).